The primary structure comprises 443 residues: Threonine/serine transporter TdcC (443 aa).

Transmembrane regions (helical) follow at residues 22–42 (TTWT…FFPI), 44–64 (AGFG…PIAF), 97–117 (GVVI…IYGV), 140–160 (VVAL…KDLM), 163–183 (VMSY…LSLI), 207–227 (ILVT…FSPI), 259–279 (ASML…FTLS), 319–339 (ASII…LGTL), 366–386 (ISMI…PNIL), 389–409 (IEAM…MYAI), and 423–443 (DNVF…YKLF).

The protein belongs to the amino acid/polyamine transporter 2 family. SdaC/TdcC subfamily.

It is found in the cell inner membrane. It catalyses the reaction L-threonine(in) + H(+)(in) = L-threonine(out) + H(+)(out). The catalysed reaction is L-serine(in) + H(+)(in) = L-serine(out) + H(+)(out). Involved in the import of threonine and serine into the cell, with the concomitant import of a proton (symport system). This Salmonella arizonae (strain ATCC BAA-731 / CDC346-86 / RSK2980) protein is Threonine/serine transporter TdcC.